Here is a 388-residue protein sequence, read N- to C-terminus: Chorismate synthase (388 aa).

Residues Arg-39 and Arg-45 each contribute to the NADP(+) site. FMN-binding positions include 130 to 132, 251 to 252, Gly-296, 311 to 315, and Arg-337; these read RSS, NA, and KPIPT.

The protein belongs to the chorismate synthase family. As to quaternary structure, homotetramer. It depends on FMNH2 as a cofactor.

The catalysed reaction is 5-O-(1-carboxyvinyl)-3-phosphoshikimate = chorismate + phosphate. Its pathway is metabolic intermediate biosynthesis; chorismate biosynthesis; chorismate from D-erythrose 4-phosphate and phosphoenolpyruvate: step 7/7. Its function is as follows. Catalyzes the anti-1,4-elimination of the C-3 phosphate and the C-6 proR hydrogen from 5-enolpyruvylshikimate-3-phosphate (EPSP) to yield chorismate, which is the branch point compound that serves as the starting substrate for the three terminal pathways of aromatic amino acid biosynthesis. This reaction introduces a second double bond into the aromatic ring system. The sequence is that of Chorismate synthase from Streptococcus pneumoniae (strain ATCC 700669 / Spain 23F-1).